Consider the following 573-residue polypeptide: ESX-1 secretion system protein EccA1 (573 aa).

Residue 334-341 (GPPGTGKT) coordinates ATP.

The protein belongs to the CbxX/CfxQ family. Part of the ESX-1 / type VII secretion system (T7SS), which is composed of cytosolic and membrane components.

It localises to the cytoplasm. Functionally, part of the ESX-1 / type VII specialized secretion system (T7SS), which exports several proteins including EsxA and EsxB. EccA1 exhibits ATPase activity and may provide energy for the export of ESX-1 substrates. In Mycobacterium leprae (strain TN), this protein is ESX-1 secretion system protein EccA1.